A 339-amino-acid chain; its full sequence is Ketol-acid reductoisomerase (NADP(+)) (339 aa).

One can recognise a KARI N-terminal Rossmann domain in the interval 1–182 (MRVYYDRDAD…GGGRAGIIET (182 aa)). NADP(+)-binding positions include 24 to 27 (YGSQ), Arg48, Ser51, Ser53, and 83 to 86 (DELQ). His108 is an active-site residue. Gly134 is an NADP(+) binding site. Residues 183–328 (TFREECETDL…AKLRDMMPWI (146 aa)) enclose the KARI C-terminal knotted domain. Residues Asp191, Glu195, Glu227, and Glu231 each contribute to the Mg(2+) site. Ser252 contributes to the substrate binding site.

The protein belongs to the ketol-acid reductoisomerase family. Mg(2+) serves as cofactor.

The catalysed reaction is (2R)-2,3-dihydroxy-3-methylbutanoate + NADP(+) = (2S)-2-acetolactate + NADPH + H(+). The enzyme catalyses (2R,3R)-2,3-dihydroxy-3-methylpentanoate + NADP(+) = (S)-2-ethyl-2-hydroxy-3-oxobutanoate + NADPH + H(+). It participates in amino-acid biosynthesis; L-isoleucine biosynthesis; L-isoleucine from 2-oxobutanoate: step 2/4. Its pathway is amino-acid biosynthesis; L-valine biosynthesis; L-valine from pyruvate: step 2/4. Involved in the biosynthesis of branched-chain amino acids (BCAA). Catalyzes an alkyl-migration followed by a ketol-acid reduction of (S)-2-acetolactate (S2AL) to yield (R)-2,3-dihydroxy-isovalerate. In the isomerase reaction, S2AL is rearranged via a Mg-dependent methyl migration to produce 3-hydroxy-3-methyl-2-ketobutyrate (HMKB). In the reductase reaction, this 2-ketoacid undergoes a metal-dependent reduction by NADPH to yield (R)-2,3-dihydroxy-isovalerate. This Rhodopseudomonas palustris (strain BisB18) protein is Ketol-acid reductoisomerase (NADP(+)).